The sequence spans 457 residues: Phosphoglucosamine mutase (457 aa).

Catalysis depends on Ser-109, which acts as the Phosphoserine intermediate. Ser-109, Asp-251, Asp-253, and Asp-255 together coordinate Mg(2+). At Ser-109 the chain carries Phosphoserine.

Belongs to the phosphohexose mutase family. Mg(2+) is required as a cofactor. In terms of processing, activated by phosphorylation.

It carries out the reaction alpha-D-glucosamine 1-phosphate = D-glucosamine 6-phosphate. In terms of biological role, catalyzes the conversion of glucosamine-6-phosphate to glucosamine-1-phosphate. This is Phosphoglucosamine mutase from Bdellovibrio bacteriovorus (strain ATCC 15356 / DSM 50701 / NCIMB 9529 / HD100).